Here is a 208-residue protein sequence, read N- to C-terminus: RNA-binding protein KhpB (208 aa).

Residues 5 to 55 form a jag_N domain region; that stretch reads TAAGRNVDEAVQSGLQELGLTKDKVEITVIEEGNKGFLGIFGKKPAIVKLV. One can recognise a KH domain in the interval 58–135; that stretch reads IDPIQQAKLY…GQYKNVTVDA (78 aa). The region spanning 140–208 is the R3H domain; sequence LKRKETLSQL…NRHLVISHKR (69 aa).

The protein belongs to the KhpB RNA-binding protein family. Forms a complex with KhpA.

The protein localises to the cytoplasm. Its function is as follows. A probable RNA chaperone. Forms a complex with KhpA which binds to cellular RNA and controls its expression. Plays a role in peptidoglycan (PG) homeostasis and cell length regulation. This is RNA-binding protein KhpB from Bacillus subtilis (strain 168).